An 89-amino-acid chain; its full sequence is DNA/RNA-binding protein Alba (89 aa).

K11 carries the post-translational modification N6-acetyllysine.

Belongs to the histone-like Alba family. In terms of processing, acetylated. Acetylation at Lys-11 decreases DNA-binding affinity.

It is found in the cytoplasm. Its subcellular location is the chromosome. In terms of biological role, binds double-stranded DNA tightly but without sequence specificity. Involved in DNA compaction. The polypeptide is DNA/RNA-binding protein Alba (Thermoplasma acidophilum (strain ATCC 25905 / DSM 1728 / JCM 9062 / NBRC 15155 / AMRC-C165)).